Consider the following 369-residue polypeptide: DNA replication and repair protein RecF (369 aa).

30–37 (GDNGSGKT) is a binding site for ATP.

Belongs to the RecF family.

Its subcellular location is the cytoplasm. The RecF protein is involved in DNA metabolism; it is required for DNA replication and normal SOS inducibility. RecF binds preferentially to single-stranded, linear DNA. It also seems to bind ATP. In Pseudomonas aeruginosa (strain LESB58), this protein is DNA replication and repair protein RecF.